The sequence spans 851 residues: DNA mismatch repair protein MutS (851 aa).

Residue 602 to 609 (GPNMSGKS) participates in ATP binding.

It belongs to the DNA mismatch repair MutS family.

This protein is involved in the repair of mismatches in DNA. It is possible that it carries out the mismatch recognition step. This protein has a weak ATPase activity. This Streptococcus equi subsp. equi (strain 4047) protein is DNA mismatch repair protein MutS.